Here is a 252-residue protein sequence, read N- to C-terminus: Pyrroloquinoline-quinone synthase (252 aa).

Belongs to the PqqC family.

It catalyses the reaction 6-(2-amino-2-carboxyethyl)-7,8-dioxo-1,2,3,4,7,8-hexahydroquinoline-2,4-dicarboxylate + 3 O2 = pyrroloquinoline quinone + 2 H2O2 + 2 H2O + H(+). Its pathway is cofactor biosynthesis; pyrroloquinoline quinone biosynthesis. Functionally, ring cyclization and eight-electron oxidation of 3a-(2-amino-2-carboxyethyl)-4,5-dioxo-4,5,6,7,8,9-hexahydroquinoline-7,9-dicarboxylic-acid to PQQ. The polypeptide is Pyrroloquinoline-quinone synthase (Acinetobacter baumannii (strain AB307-0294)).